The chain runs to 288 residues: Phosphatidylserine decarboxylase proenzyme (288 aa).

Catalysis depends on charge relay system; for autoendoproteolytic cleavage activity residues D101, H158, and S262. Residue S262 is the Schiff-base intermediate with substrate; via pyruvic acid; for decarboxylase activity of the active site. Position 262 is a pyruvic acid (Ser); by autocatalysis (S262).

The protein belongs to the phosphatidylserine decarboxylase family. PSD-B subfamily. Prokaryotic type I sub-subfamily. In terms of assembly, heterodimer of a large membrane-associated beta subunit and a small pyruvoyl-containing alpha subunit. It depends on pyruvate as a cofactor. In terms of processing, is synthesized initially as an inactive proenzyme. Formation of the active enzyme involves a self-maturation process in which the active site pyruvoyl group is generated from an internal serine residue via an autocatalytic post-translational modification. Two non-identical subunits are generated from the proenzyme in this reaction, and the pyruvate is formed at the N-terminus of the alpha chain, which is derived from the carboxyl end of the proenzyme. The autoendoproteolytic cleavage occurs by a canonical serine protease mechanism, in which the side chain hydroxyl group of the serine supplies its oxygen atom to form the C-terminus of the beta chain, while the remainder of the serine residue undergoes an oxidative deamination to produce ammonia and the pyruvoyl prosthetic group on the alpha chain. During this reaction, the Ser that is part of the protease active site of the proenzyme becomes the pyruvoyl prosthetic group, which constitutes an essential element of the active site of the mature decarboxylase.

It is found in the cell membrane. It carries out the reaction a 1,2-diacyl-sn-glycero-3-phospho-L-serine + H(+) = a 1,2-diacyl-sn-glycero-3-phosphoethanolamine + CO2. It participates in phospholipid metabolism; phosphatidylethanolamine biosynthesis; phosphatidylethanolamine from CDP-diacylglycerol: step 2/2. Functionally, catalyzes the formation of phosphatidylethanolamine (PtdEtn) from phosphatidylserine (PtdSer). The chain is Phosphatidylserine decarboxylase proenzyme from Alkalilimnicola ehrlichii (strain ATCC BAA-1101 / DSM 17681 / MLHE-1).